Here is a 428-residue protein sequence, read N- to C-terminus: Bifunctional protein GlmU (428 aa).

Residues 1–221 (MDIVILAAGC…ERKAMGINTR (221 aa)) form a pyrophosphorylase region. UDP-N-acetyl-alpha-D-glucosamine contacts are provided by residues 6-9 (LAAG), Lys-20, Gln-74, 79-80 (GT), 103-105 (YGD), Gly-140, and Asn-219. Asp-105 contributes to the Mg(2+) binding site. Asn-219 contacts Mg(2+). Residues 222 to 242 (ADLAIAESYFQCMKRASFLQS) form a linker region. Positions 243–428 (GVTLTSPDQV…TTKPEYKTRR (186 aa)) are N-acetyltransferase. Residues Arg-308 and Lys-326 each contribute to the UDP-N-acetyl-alpha-D-glucosamine site. The Proton acceptor role is filled by His-338. UDP-N-acetyl-alpha-D-glucosamine-binding residues include Tyr-341 and Asn-352. Acetyl-CoA-binding positions include Ala-355, 361 to 362 (NY), Ala-398, and Arg-415.

In the N-terminal section; belongs to the N-acetylglucosamine-1-phosphate uridyltransferase family. The protein in the C-terminal section; belongs to the transferase hexapeptide repeat family. In terms of assembly, homotrimer. It depends on Mg(2+) as a cofactor.

Its subcellular location is the cytoplasm. It catalyses the reaction alpha-D-glucosamine 1-phosphate + acetyl-CoA = N-acetyl-alpha-D-glucosamine 1-phosphate + CoA + H(+). It carries out the reaction N-acetyl-alpha-D-glucosamine 1-phosphate + UTP + H(+) = UDP-N-acetyl-alpha-D-glucosamine + diphosphate. It functions in the pathway nucleotide-sugar biosynthesis; UDP-N-acetyl-alpha-D-glucosamine biosynthesis; N-acetyl-alpha-D-glucosamine 1-phosphate from alpha-D-glucosamine 6-phosphate (route II): step 2/2. It participates in nucleotide-sugar biosynthesis; UDP-N-acetyl-alpha-D-glucosamine biosynthesis; UDP-N-acetyl-alpha-D-glucosamine from N-acetyl-alpha-D-glucosamine 1-phosphate: step 1/1. Its pathway is bacterial outer membrane biogenesis; LPS lipid A biosynthesis. Functionally, catalyzes the last two sequential reactions in the de novo biosynthetic pathway for UDP-N-acetylglucosamine (UDP-GlcNAc). The C-terminal domain catalyzes the transfer of acetyl group from acetyl coenzyme A to glucosamine-1-phosphate (GlcN-1-P) to produce N-acetylglucosamine-1-phosphate (GlcNAc-1-P), which is converted into UDP-GlcNAc by the transfer of uridine 5-monophosphate (from uridine 5-triphosphate), a reaction catalyzed by the N-terminal domain. The polypeptide is Bifunctional protein GlmU (Anaplasma marginale (strain Florida)).